We begin with the raw amino-acid sequence, 88 residues long: Small ribosomal subunit protein uS15c (88 aa).

Belongs to the universal ribosomal protein uS15 family. As to quaternary structure, part of the 30S ribosomal subunit.

The protein localises to the plastid. Its subcellular location is the chloroplast. This chain is Small ribosomal subunit protein uS15c (rps15), found in Arabidopsis thaliana (Mouse-ear cress).